The primary structure comprises 358 residues: E3 ubiquitin-protein ligase SIS3 (358 aa).

Residues 1–27 (MAMRGVDFKWYDGFFLSMLATSVIIVA) form the signal peptide. Helical transmembrane passes span 40 to 60 (LHIWIVVDYTTVFIFRVFMFV), 85 to 105 (VVVLSVLSLLLYPFLWAWTVI), and 125 to 145 (GFLIWLMFSYCGLLCIAFICV). The RING-type; atypical zinc finger occupies 235-276 (CLICLEEFHIGHEVRGLPCAHNFHVECIDQWLRLNVKCPRCR). A disordered region spans residues 336–358 (TALETAENGGVPPVLTDLSPSRR).

Expressed in roots, stems, leaves, flowers and siliques.

Its subcellular location is the membrane. It carries out the reaction S-ubiquitinyl-[E2 ubiquitin-conjugating enzyme]-L-cysteine + [acceptor protein]-L-lysine = [E2 ubiquitin-conjugating enzyme]-L-cysteine + N(6)-ubiquitinyl-[acceptor protein]-L-lysine.. Its pathway is protein modification; protein ubiquitination. E3 ubiquitin protein ligase that acts as a positive regulator of sugar signaling during early seedling development. Possesses E3 ligase activity in vitro. This chain is E3 ubiquitin-protein ligase SIS3 (SIS3), found in Arabidopsis thaliana (Mouse-ear cress).